Consider the following 116-residue polypeptide: uncharacterized protein (116 aa).

An HTH cro/C1-type domain is found at Leu6–Leu60. Residues Gln17–Leu36 constitute a DNA-binding region (H-T-H motif).

This is an uncharacterized protein from Bacillus subtilis (strain 168).